Reading from the N-terminus, the 644-residue chain is Threonine--tRNA ligase (644 aa).

In terms of domain architecture, TGS spans Met1–Thr61. Residues Asp242–Pro533 are catalytic. 3 residues coordinate Zn(2+): Cys333, His384, and His510.

It belongs to the class-II aminoacyl-tRNA synthetase family. As to quaternary structure, homodimer. Zn(2+) is required as a cofactor.

The protein resides in the cytoplasm. It carries out the reaction tRNA(Thr) + L-threonine + ATP = L-threonyl-tRNA(Thr) + AMP + diphosphate + H(+). In terms of biological role, catalyzes the attachment of threonine to tRNA(Thr) in a two-step reaction: L-threonine is first activated by ATP to form Thr-AMP and then transferred to the acceptor end of tRNA(Thr). Also edits incorrectly charged L-seryl-tRNA(Thr). The protein is Threonine--tRNA ligase of Psychrobacter sp. (strain PRwf-1).